We begin with the raw amino-acid sequence, 1057 residues long: Carbamoyl phosphate synthase large chain (1057 aa).

Residues 1–401 are carboxyphosphate synthetic domain; it reads MPKRNDIKTI…SLLKAIRSLE (401 aa). Residues Arg-129, Arg-169, Gly-175, Gly-176, Lys-208, Ile-210, Glu-215, Gly-241, Ile-242, His-243, Gln-284, and Glu-298 each coordinate ATP. The 195-residue stretch at 133-327 folds into the ATP-grasp 1 domain; sequence RTLMNDLNVP…IAKLAAKIAV (195 aa). Residues Gln-284, Glu-298, and Asn-300 each coordinate Mg(2+). 3 residues coordinate Mn(2+): Gln-284, Glu-298, and Asn-300. Residues 402 to 546 are oligomerization domain; that stretch reads YGVHHLGLPN…YGTYETENES (145 aa). Residues 547–929 are carbamoyl phosphate synthetic domain; it reads IVTDKEKILV…ALFKGLTGSG (383 aa). The ATP-grasp 2 domain maps to 671 to 861; sequence EALLRKINVP…MAQLAMRAII (191 aa). Residues Arg-707, Arg-746, Leu-748, Glu-752, Gly-777, Val-778, His-779, Ser-780, Gln-820, and Glu-832 each coordinate ATP. The Mg(2+) site is built by Gln-820, Glu-832, and Asn-834. Mn(2+) is bound by residues Gln-820, Glu-832, and Asn-834. Positions 930–1057 constitute an MGS-like domain; sequence VEVKDHGTVL…ESMTFTMRQM (128 aa). The tract at residues 930–1057 is allosteric domain; it reads VEVKDHGTVL…ESMTFTMRQM (128 aa).

Belongs to the CarB family. As to quaternary structure, composed of two chains; the small (or glutamine) chain promotes the hydrolysis of glutamine to ammonia, which is used by the large (or ammonia) chain to synthesize carbamoyl phosphate. Tetramer of heterodimers (alpha,beta)4. Mg(2+) serves as cofactor. It depends on Mn(2+) as a cofactor.

It catalyses the reaction hydrogencarbonate + L-glutamine + 2 ATP + H2O = carbamoyl phosphate + L-glutamate + 2 ADP + phosphate + 2 H(+). The catalysed reaction is hydrogencarbonate + NH4(+) + 2 ATP = carbamoyl phosphate + 2 ADP + phosphate + 2 H(+). Its pathway is amino-acid biosynthesis; L-arginine biosynthesis; carbamoyl phosphate from bicarbonate: step 1/1. The protein operates within pyrimidine metabolism; UMP biosynthesis via de novo pathway; (S)-dihydroorotate from bicarbonate: step 1/3. Its function is as follows. Large subunit of the glutamine-dependent carbamoyl phosphate synthetase (CPSase). CPSase catalyzes the formation of carbamoyl phosphate from the ammonia moiety of glutamine, carbonate, and phosphate donated by ATP, constituting the first step of 2 biosynthetic pathways, one leading to arginine and/or urea and the other to pyrimidine nucleotides. The large subunit (synthetase) binds the substrates ammonia (free or transferred from glutamine from the small subunit), hydrogencarbonate and ATP and carries out an ATP-coupled ligase reaction, activating hydrogencarbonate by forming carboxy phosphate which reacts with ammonia to form carbamoyl phosphate. The protein is Carbamoyl phosphate synthase large chain of Staphylococcus aureus (strain USA300 / TCH1516).